The chain runs to 543 residues: Cyclohexanone 1,2-monooxygenase (543 aa).

6 residues coordinate FAD: F16, D37, W46, D57, Y63, and V110.

This sequence belongs to the FAD-binding monooxygenase family. FAD is required as a cofactor.

The catalysed reaction is cyclohexanone + NADPH + O2 + H(+) = hexano-6-lactone + NADP(+) + H2O. The sequence is that of Cyclohexanone 1,2-monooxygenase from Acinetobacter sp.